The chain runs to 209 residues: Pyridoxal 5'-phosphate synthase subunit PdxT (209 aa).

58-60 (GES) lines the L-glutamine pocket. The active-site Nucleophile is Cys90. Residues Arg119 and 148-149 (IR) contribute to the L-glutamine site. Catalysis depends on charge relay system residues His185 and Glu187.

It belongs to the glutaminase PdxT/SNO family. In the presence of PdxS, forms a dodecamer of heterodimers. Only shows activity in the heterodimer.

The enzyme catalyses aldehydo-D-ribose 5-phosphate + D-glyceraldehyde 3-phosphate + L-glutamine = pyridoxal 5'-phosphate + L-glutamate + phosphate + 3 H2O + H(+). It carries out the reaction L-glutamine + H2O = L-glutamate + NH4(+). The protein operates within cofactor biosynthesis; pyridoxal 5'-phosphate biosynthesis. In terms of biological role, catalyzes the hydrolysis of glutamine to glutamate and ammonia as part of the biosynthesis of pyridoxal 5'-phosphate. The resulting ammonia molecule is channeled to the active site of PdxS. This is Pyridoxal 5'-phosphate synthase subunit PdxT from Clavibacter sepedonicus (Clavibacter michiganensis subsp. sepedonicus).